Reading from the N-terminus, the 395-residue chain is S-adenosylmethionine synthase (395 aa).

An ATP-binding site is contributed by histidine 16. Position 18 (aspartate 18) interacts with Mg(2+). Glutamate 44 contributes to the K(+) binding site. L-methionine is bound by residues glutamate 57 and glutamine 100. Residues 100–110 form a flexible loop region; the sequence is QSPDIAQGVDD. ATP-binding positions include 174–176, 241–242, aspartate 250, 256–257, alanine 273, and lysine 277; these read DAK, RF, and RK. Residue aspartate 250 coordinates L-methionine. Residue lysine 281 participates in L-methionine binding.

This sequence belongs to the AdoMet synthase family. Homotetramer; dimer of dimers. Requires Mg(2+) as cofactor. The cofactor is K(+).

The protein localises to the cytoplasm. The catalysed reaction is L-methionine + ATP + H2O = S-adenosyl-L-methionine + phosphate + diphosphate. It participates in amino-acid biosynthesis; S-adenosyl-L-methionine biosynthesis; S-adenosyl-L-methionine from L-methionine: step 1/1. Catalyzes the formation of S-adenosylmethionine (AdoMet) from methionine and ATP. The overall synthetic reaction is composed of two sequential steps, AdoMet formation and the subsequent tripolyphosphate hydrolysis which occurs prior to release of AdoMet from the enzyme. This chain is S-adenosylmethionine synthase, found in Levilactobacillus brevis (strain ATCC 367 / BCRC 12310 / CIP 105137 / JCM 1170 / LMG 11437 / NCIMB 947 / NCTC 947) (Lactobacillus brevis).